The following is a 556-amino-acid chain: Endoglucanase 22 (556 aa).

The first 33 residues, 1–33 (MSRGRARLQPPPPGTRTTTLAAVLVLVLLAVVA), serve as a signal peptide directing secretion. Asp-108 (nucleophile) is an active-site residue. Active-site residues include His-450, Asp-502, and Glu-511.

The protein belongs to the glycosyl hydrolase 9 (cellulase E) family.

It is found in the secreted. It carries out the reaction Endohydrolysis of (1-&gt;4)-beta-D-glucosidic linkages in cellulose, lichenin and cereal beta-D-glucans.. This is Endoglucanase 22 (GLU11) from Oryza sativa subsp. japonica (Rice).